The primary structure comprises 120 residues: Aspartate 1-decarboxylase (120 aa).

Serine 25 functions as the Schiff-base intermediate with substrate; via pyruvic acid in the catalytic mechanism. The residue at position 25 (serine 25) is a Pyruvic acid (Ser). Position 57 (threonine 57) interacts with substrate. Catalysis depends on tyrosine 58, which acts as the Proton donor. 73–75 (GAA) provides a ligand contact to substrate.

This sequence belongs to the PanD family. Heterooctamer of four alpha and four beta subunits. Requires pyruvate as cofactor. Is synthesized initially as an inactive proenzyme, which is activated by self-cleavage at a specific serine bond to produce a beta-subunit with a hydroxyl group at its C-terminus and an alpha-subunit with a pyruvoyl group at its N-terminus.

It is found in the cytoplasm. It carries out the reaction L-aspartate + H(+) = beta-alanine + CO2. The protein operates within cofactor biosynthesis; (R)-pantothenate biosynthesis; beta-alanine from L-aspartate: step 1/1. Its function is as follows. Catalyzes the pyruvoyl-dependent decarboxylation of aspartate to produce beta-alanine. The sequence is that of Aspartate 1-decarboxylase from Thermosipho africanus (strain TCF52B).